Consider the following 292-residue polypeptide: Protease HtpX (292 aa).

Transmembrane regions (helical) follow at residues 5–25 (IFLF…VMSV) and 34–54 (SGLL…SLLL). Residue His140 coordinates Zn(2+). Glu141 is an active-site residue. Residue His144 participates in Zn(2+) binding. The next 2 membrane-spanning stretches (helical) occupy residues 155 to 175 (LLQG…GGII) and 193 to 213 (IIVF…AMWF). Position 218 (Glu218) interacts with Zn(2+).

It belongs to the peptidase M48B family. Requires Zn(2+) as cofactor.

It localises to the cell inner membrane. The chain is Protease HtpX from Xanthomonas oryzae pv. oryzae (strain MAFF 311018).